A 781-amino-acid chain; its full sequence is N-acetylneuraminate (7)9-O-acetyltransferase (781 aa).

Residues methionine 1–glutamine 15 are Cytoplasmic-facing. Residues tyrosine 16–phenylalanine 36 traverse the membrane as a helical segment. The Lumenal segment spans residues histidine 37–lysine 308. The active-site Acyl-ester intermediate is the serine 94. Residues asparagine 139, asparagine 185, and asparagine 239 are each glycosylated (N-linked (GlcNAc...) asparagine). Residues aspartate 264 and histidine 267 contribute to the active site. The helical transmembrane segment at leucine 309–histidine 329 threads the bilayer. The interval arginine 330–valine 350 is disordered. Residues arginine 330–asparagine 354 lie on the Cytoplasmic side of the membrane. The chain crosses the membrane as a helical span at residues proline 355–cysteine 375. Residues aspartate 376–lysine 386 are Lumenal-facing. Residues phenylalanine 387–tyrosine 407 form a helical membrane-spanning segment. The Cytoplasmic portion of the chain corresponds to serine 408–glutamine 430. Residues leucine 431–valine 451 form a helical membrane-spanning segment. Arginine 452 is a topological domain (lumenal). The chain crosses the membrane as a helical span at residues valine 453 to lysine 473. Residues glycine 474–glycine 477 lie on the Cytoplasmic side of the membrane. The helical transmembrane segment at leucine 478–valine 498 threads the bilayer. Over methionine 499–glutamine 504 the chain is Lumenal. A helical transmembrane segment spans residues phenylalanine 505–leucine 525. The Cytoplasmic portion of the chain corresponds to tryptophan 526 to serine 537. A helical transmembrane segment spans residues alanine 538–phenylalanine 558. The Lumenal portion of the chain corresponds to alanine 559–arginine 595. Residues phenylalanine 596 to leucine 616 form a helical membrane-spanning segment. The Cytoplasmic portion of the chain corresponds to leucine 617–lysine 629. Residues isoleucine 630–serine 650 form a helical membrane-spanning segment. Residues glycine 651–glutamate 660 are Lumenal-facing. Asparagine 654 carries N-linked (GlcNAc...) asparagine glycosylation. The chain crosses the membrane as a helical span at residues methionine 661–alanine 681. Residues arginine 682–serine 687 lie on the Cytoplasmic side of the membrane. Residues phenylalanine 688–leucine 708 form a helical membrane-spanning segment. At alanine 709–glycine 714 the chain is on the lumenal side. A helical transmembrane segment spans residues isoleucine 715–valine 735. Over cysteine 736 to glutamate 756 the chain is Cytoplasmic. Residues serine 757–leucine 777 form a helical membrane-spanning segment. Residues serine 778–aspartate 781 are Lumenal-facing.

It belongs to the PC-esterase family. CASD1 subfamily.

It is found in the golgi apparatus membrane. It catalyses the reaction CMP-N-acetyl-beta-neuraminate + acetyl-CoA = CMP-N-acetyl-9-O-acetyl-beta-neuraminate + CoA. The catalysed reaction is a ganglioside GD3 (d18:1(4E)) + acetyl-CoA = a ganglioside Ac-O-7-GD3(d18:1(4E)) + CoA. It carries out the reaction CMP-N-acetyl-beta-neuraminate + acetyl-CoA = CMP-N-acetyl-7-O-acetyl-beta-neuraminate + CoA. Key enzyme in the biosynthesis of O-acetylated (O-Ac) sialoglycans such as gangliosides O-AcGD3 and O-AcGD2, which affect various processes such as cell-cell interactions, host-pathogen recognition. Catalyzes the transfer of an acetyl group from a donor, the acetyl-coenzyme-A molecule (acetyl-CoA), to the C7/8/9 OH-position of a sialic acid residue. The primary site of O-acetyl group transfer on sialic acid seems to depend on cell type and can be C7, from which the O-acetyl group could subsequently migrate to the C8 and then to the C9 position, or at C9 with possibility of migrating to the C8 and then to the C7 position. Together with ST8SIA1 (GD3 synthase) it increases the levels of ganglioside Ac-O-7-GD3. Can transfer the acetyl group from acetyl-CoA to free sialate (N-acetylneuraminate, Neu5Ac) in vitro, but has preferred substrate specificity for CMP-activated sialate (CMP-Neu5Ac), resulting in the formation of 9-O-acetylated CMP-Neu5Ac (CMP-Neu5,9Ac2). CMP-Neu5,9Ac2 may be used by sialyltransferases as a sialate donor for glycoconjugate acceptors such as ganglioside GD3. O-acetylation at position C9 of ganglioside GD3 can counteract the pro-apoptotic effects of the ganglioside GD3 in tumor cells. This is N-acetylneuraminate (7)9-O-acetyltransferase from Danio rerio (Zebrafish).